The primary structure comprises 418 residues: Histidine--tRNA ligase (418 aa).

It belongs to the class-II aminoacyl-tRNA synthetase family. As to quaternary structure, homodimer.

It is found in the cytoplasm. It carries out the reaction tRNA(His) + L-histidine + ATP = L-histidyl-tRNA(His) + AMP + diphosphate + H(+). This is Histidine--tRNA ligase from Thermoanaerobacter sp. (strain X514).